Here is a 758-residue protein sequence, read N- to C-terminus: Catalase-peroxidase (758 aa).

The span at 1-10 shows a compositional bias: polar residues; that stretch reads MSDTQDNAPV. A disordered region spans residues 1–57; that stretch reads MSDTQDNAPVSAQGVDQKAAAGCPVAHDSVTAHGSESESPAIDSPSAVGGGRPRTNR. Positions 128–250 form a cross-link, tryptophyl-tyrosyl-methioninium (Trp-Tyr) (with M-276); it reads WHAAGTYRIH…VGATEMGLIY (123 aa). The Proton acceptor role is filled by His-129. Residues 250-276 constitute a cross-link (tryptophyl-tyrosyl-methioninium (Tyr-Met) (with W-128)); the sequence is YVNPEGPRGNADPASAAHFIRETFRRM. Heme b is bound at residue His-291.

It belongs to the peroxidase family. Peroxidase/catalase subfamily. As to quaternary structure, homodimer or homotetramer. It depends on heme b as a cofactor. Post-translationally, formation of the three residue Trp-Tyr-Met cross-link is important for the catalase, but not the peroxidase activity of the enzyme.

It catalyses the reaction H2O2 + AH2 = A + 2 H2O. It carries out the reaction 2 H2O2 = O2 + 2 H2O. In terms of biological role, bifunctional enzyme with both catalase and broad-spectrum peroxidase activity. The chain is Catalase-peroxidase from Salinispora tropica (strain ATCC BAA-916 / DSM 44818 / JCM 13857 / NBRC 105044 / CNB-440).